The sequence spans 610 residues: Elongation factor 4 (610 aa).

The tr-type G domain occupies 11–193 (EKIRNFSIIA…QIVEKVPAPT (183 aa)). GTP contacts are provided by residues 23-28 (DHGKST) and 140-143 (NKID).

The protein belongs to the TRAFAC class translation factor GTPase superfamily. Classic translation factor GTPase family. LepA subfamily.

Its subcellular location is the cell membrane. It catalyses the reaction GTP + H2O = GDP + phosphate + H(+). Its function is as follows. Required for accurate and efficient protein synthesis under certain stress conditions. May act as a fidelity factor of the translation reaction, by catalyzing a one-codon backward translocation of tRNAs on improperly translocated ribosomes. Back-translocation proceeds from a post-translocation (POST) complex to a pre-translocation (PRE) complex, thus giving elongation factor G a second chance to translocate the tRNAs correctly. Binds to ribosomes in a GTP-dependent manner. The polypeptide is Elongation factor 4 (Streptococcus pyogenes serotype M49 (strain NZ131)).